A 397-amino-acid polypeptide reads, in one-letter code: Dual oxidase maturation factor 1 (397 aa).

2 consecutive transmembrane segments (helical) span residues 26 to 46 and 57 to 77; these read FVIFSVFLIPLIAYILILPGV and YVLMLAVGGALIASLIYPCWA. N-linked (GlcNAc...) asparagine glycosylation occurs at Asn-109. 3 helical membrane-spanning segments follow: residues 191 to 211, 218 to 238, and 261 to 281; these read AAIWFAFACWCLSVVLMLFLP, ILATGISCLIACLVYLLLSPC, and CFYLIFAIGILCVLCGLGLGI. Positions 324–376 are disordered; that stretch reads YGTNTTNSSRDKNDISSDKTAGSSGFQSRTSTCQSSASSASLRSQSSIETVHD. Residues Asn-327 and Asn-330 are each glycosylated (N-linked (GlcNAc...) asparagine). Residues 341–350 show a composition bias toward polar residues; sequence DKTAGSSGFQ. Residues 351 to 370 show a composition bias toward low complexity; sequence SRTSTCQSSASSASLRSQSS.

It belongs to the DUOXA family. As to quaternary structure, interacts with bli-3 and tsp-15. Interacts with csnk-1. In terms of tissue distribution, expressed in the hypodermis, specifically in seam cells, the terminal bulb of the pharynx, the distal region of the gonadal arm, vulva, spermatheca and uterus.

It localises to the membrane. Functionally, plays a role in cuticle biogenesis. In complex with tsp-15 and the dual oxidase bli-3, promotes the generation of reactive oxygen species (ROS) and tyrosine cross-linking of collagen, thus stabilizing cuticular extracellular matrix. The protein is Dual oxidase maturation factor 1 of Caenorhabditis elegans.